Here is a 77-residue protein sequence, read N- to C-terminus: Translational regulator CsrA (77 aa).

This sequence belongs to the CsrA/RsmA family. Homodimer; the beta-strands of each monomer intercalate to form a hydrophobic core, while the alpha-helices form wings that extend away from the core.

Its subcellular location is the cytoplasm. Functionally, a translational regulator that binds mRNA to regulate translation initiation and/or mRNA stability. Usually binds in the 5'-UTR at or near the Shine-Dalgarno sequence preventing ribosome-binding, thus repressing translation. Its main target seems to be the major flagellin gene, while its function is anatagonized by FliW. This is Translational regulator CsrA from Pseudarthrobacter chlorophenolicus (strain ATCC 700700 / DSM 12829 / CIP 107037 / JCM 12360 / KCTC 9906 / NCIMB 13794 / A6) (Arthrobacter chlorophenolicus).